A 319-amino-acid polypeptide reads, in one-letter code: MamJ paralog LimJ (319 aa).

2 disordered regions span residues 1 to 59 (MMME…PAPV) and 145 to 176 (AAAP…TETE). Positions 30–52 (AALAPAADAEIPASSAPEPAAPI) are enriched in low complexity. The segment covering 150–164 (PEPEPVPEPEPEPEP) has biased composition (acidic residues).

The protein belongs to the magnetosome MamJ protein family.

Its subcellular location is the magnetosome. Regulates the dynamic behavior of MamK filaments; paralog MamJ also promotes MamK turnover. At least one other protein besides MamJ and LimJ is required for MamK turnover. Might connect magnetosomes to MamK filaments. This chain is MamJ paralog LimJ, found in Paramagnetospirillum magneticum (strain ATCC 700264 / AMB-1) (Magnetospirillum magneticum).